The following is a 341-amino-acid chain: Elongation factor Ts (341 aa).

The involved in Mg(2+) ion dislocation from EF-Tu stretch occupies residues 80–83 (TDFV).

It belongs to the EF-Ts family.

The protein localises to the cytoplasm. Associates with the EF-Tu.GDP complex and induces the exchange of GDP to GTP. It remains bound to the aminoacyl-tRNA.EF-Tu.GTP complex up to the GTP hydrolysis stage on the ribosome. The protein is Elongation factor Ts of Lactobacillus acidophilus (strain ATCC 700396 / NCK56 / N2 / NCFM).